The chain runs to 446 residues: Exodeoxyribonuclease 7 large subunit (446 aa).

Belongs to the XseA family. Heterooligomer composed of large and small subunits.

It localises to the cytoplasm. It catalyses the reaction Exonucleolytic cleavage in either 5'- to 3'- or 3'- to 5'-direction to yield nucleoside 5'-phosphates.. Bidirectionally degrades single-stranded DNA into large acid-insoluble oligonucleotides, which are then degraded further into small acid-soluble oligonucleotides. The polypeptide is Exodeoxyribonuclease 7 large subunit (Streptococcus pneumoniae (strain ATCC BAA-255 / R6)).